A 516-amino-acid chain; its full sequence is Probable serine/threonine-protein kinase WNK3 (516 aa).

A Protein kinase domain is found at 22–280; the sequence is GRYKEVLGKG…AKELLDDPFL (259 aa). Residues 102 to 105 and K152 contribute to the ATP site; that span reads TEVF. D169 functions as the Proton acceptor in the catalytic mechanism. The tract at residues 426–451 is disordered; sequence SSPKAGAGDSRSPFAPRSNSKLSSAQ. The span at 442-451 shows a compositional bias: polar residues; that stretch reads RSNSKLSSAQ. The stretch at 457-490 forms a coiled coil; sequence EVGVIVEKLESLLRKQREEIEEMQRDQERIVTEF.

This sequence belongs to the protein kinase superfamily. Ser/Thr protein kinase family. WNK subfamily.

It carries out the reaction L-seryl-[protein] + ATP = O-phospho-L-seryl-[protein] + ADP + H(+). The catalysed reaction is L-threonyl-[protein] + ATP = O-phospho-L-threonyl-[protein] + ADP + H(+). In terms of biological role, may regulate flowering time by modulating the photoperiod pathway. This chain is Probable serine/threonine-protein kinase WNK3 (WNK3), found in Arabidopsis thaliana (Mouse-ear cress).